The primary structure comprises 201 residues: Small ribosomal subunit protein uS4 (201 aa).

In terms of domain architecture, S4 RNA-binding spans 93–156; that stretch reads RRLDNMVYRL…KNLDIIKNAV (64 aa).

It belongs to the universal ribosomal protein uS4 family. As to quaternary structure, part of the 30S ribosomal subunit. Contacts protein S5. The interaction surface between S4 and S5 is involved in control of translational fidelity.

One of the primary rRNA binding proteins, it binds directly to 16S rRNA where it nucleates assembly of the body of the 30S subunit. Functionally, with S5 and S12 plays an important role in translational accuracy. The polypeptide is Small ribosomal subunit protein uS4 (Limosilactobacillus reuteri subsp. reuteri (strain JCM 1112) (Lactobacillus reuteri)).